We begin with the raw amino-acid sequence, 99 residues long: Integration host factor subunit alpha (99 aa).

The disordered stretch occupies residues 49–72; that stretch reads FGNFDLRDKNQRPGRNPKTGEDIP.

It belongs to the bacterial histone-like protein family. As to quaternary structure, heterodimer of an alpha and a beta chain.

This protein is one of the two subunits of integration host factor, a specific DNA-binding protein that functions in genetic recombination as well as in transcriptional and translational control. This is Integration host factor subunit alpha from Escherichia coli O9:H4 (strain HS).